Here is a 182-residue protein sequence, read N- to C-terminus: Putative manganese efflux pump MntP (182 aa).

6 helical membrane passes run 7 to 27 (IISI…VSLG), 38 to 58 (IAYI…AGML), 71 to 91 (TSFA…FSAF), 106 to 126 (LWII…GLGI), 131 to 151 (IFVT…LGML), and 159 to 179 (FLGV…GIFI).

This sequence belongs to the MntP (TC 9.B.29) family.

The protein localises to the cell membrane. Functionally, probably functions as a manganese efflux pump. The chain is Putative manganese efflux pump MntP from Oceanobacillus iheyensis (strain DSM 14371 / CIP 107618 / JCM 11309 / KCTC 3954 / HTE831).